A 219-amino-acid polypeptide reads, in one-letter code: 2-hydroxy-3-keto-5-methylthiopentenyl-1-phosphate phosphatase (219 aa).

This sequence belongs to the HAD-like hydrolase superfamily. MtnX family.

It catalyses the reaction 2-hydroxy-5-methylsulfanyl-3-oxopent-1-enyl phosphate + H2O = 1,2-dihydroxy-5-(methylsulfanyl)pent-1-en-3-one + phosphate. Its pathway is amino-acid biosynthesis; L-methionine biosynthesis via salvage pathway; L-methionine from S-methyl-5-thio-alpha-D-ribose 1-phosphate: step 4/6. Dephosphorylates 2-hydroxy-3-keto-5-methylthiopentenyl-1-phosphate (HK-MTPenyl-1-P) yielding 1,2-dihydroxy-3-keto-5-methylthiopentene (DHK-MTPene). This is 2-hydroxy-3-keto-5-methylthiopentenyl-1-phosphate phosphatase from Bacillus cereus (strain ATCC 14579 / DSM 31 / CCUG 7414 / JCM 2152 / NBRC 15305 / NCIMB 9373 / NCTC 2599 / NRRL B-3711).